We begin with the raw amino-acid sequence, 77 residues long: Small ribosomal subunit protein uS17 (77 aa).

The protein belongs to the universal ribosomal protein uS17 family. As to quaternary structure, part of the 30S ribosomal subunit.

Its function is as follows. One of the primary rRNA binding proteins, it binds specifically to the 5'-end of 16S ribosomal RNA. The sequence is that of Small ribosomal subunit protein uS17 from Wolbachia sp. subsp. Brugia malayi (strain TRS).